Here is a 28-residue protein sequence, read N- to C-terminus: GVFCGELCIKASCSIPGCECIAGLCYKN.

Cystine bridges form between C4–C18, C8–C20, and C13–C25.

This is a cyclic peptide. Post-translationally, contains 3 disulfide bonds.

Its function is as follows. Probably participates in a plant defense mechanism. The polypeptide is Cyclotide vodo I2 (Viola odorata (Sweet violet)).